The sequence spans 253 residues: Nurim homolog (253 aa).

The Nuclear portion of the chain corresponds to 1-2; it reads MT. A helical transmembrane segment spans residues 3–30; that stretch reads SIAKSIVLLASLATFAYSLYVVGSLMMF. Over 31–56 the chain is Perinuclear space; that stretch reads LSTPRSISKAHTWIFNLLDNKSRLQT. Residues 57-78 form a helical membrane-spanning segment; it reads AYGPVVFDTLYLIGFIFQHSFL. Topologically, residues 79–96 are nuclear; sequence KSAVVKKLLAKLGLSGAE. Residues 97–113 form a helical membrane-spanning segment; it reads RTIYSLTSSLCLHYLIV. Over 114–132 the chain is Perinuclear space; sequence NWLPAQSIVLWQIDVEQSA. A helical transmembrane segment spans residues 133–161; sequence PLWWTFVITHGICWVVIFGGSLVMDLPEL. Residues 162–188 are Nuclear-facing; the sequence is LGVKQAYYDLKAYGPPISYKSGELRNL. The chain crosses the membrane as a helical span at residues 189–207; it reads YAHVRHPSFVGLSVILFAT. Residues 208 to 213 lie on the Perinuclear space side of the membrane; it reads NVMSVD. The helical transmembrane segment at 214–231 threads the bilayer; sequence RLVMALLLTTYMYLAWST. Residues 232–253 lie on the Nuclear side of the membrane; the sequence is DQKDVAYQKIQLQRKKLELKAK.

The protein belongs to the nurim family.

The protein resides in the nucleus inner membrane. This chain is Nurim homolog (nrm), found in Drosophila melanogaster (Fruit fly).